The following is a 352-amino-acid chain: DNA polymerase IV (352 aa).

The UmuC domain occupies 6-187 (IIHIDADCFY…VPVKFISGIG (182 aa)). 2 residues coordinate Mg(2+): aspartate 10 and aspartate 105. The active site involves glutamate 106.

It belongs to the DNA polymerase type-Y family. As to quaternary structure, monomer. Mg(2+) is required as a cofactor.

It is found in the cytoplasm. It catalyses the reaction DNA(n) + a 2'-deoxyribonucleoside 5'-triphosphate = DNA(n+1) + diphosphate. Functionally, poorly processive, error-prone DNA polymerase involved in untargeted mutagenesis. Copies undamaged DNA at stalled replication forks, which arise in vivo from mismatched or misaligned primer ends. These misaligned primers can be extended by PolIV. Exhibits no 3'-5' exonuclease (proofreading) activity. May be involved in translesional synthesis, in conjunction with the beta clamp from PolIII. In Marinomonas sp. (strain MWYL1), this protein is DNA polymerase IV.